The chain runs to 106 residues: N(2)-fixation sustaining protein CowN (106 aa).

It belongs to the CowN family.

Its function is as follows. Is required to sustain N(2)-dependent growth in the presence of low levels of carbon monoxide (CO). Probably acts by protecting the N(2) fixation ability of the nitrogenase complex, which is inactivated in the presence of CO. The chain is N(2)-fixation sustaining protein CowN from Denitrovibrio acetiphilus (strain DSM 12809 / NBRC 114555 / N2460).